Consider the following 417-residue polypeptide: Serine hydroxymethyltransferase 2 (417 aa).

Residues leucine 121 and 125-127 each bind (6S)-5,6,7,8-tetrahydrofolate; that span reads GHL. Position 230 is an N6-(pyridoxal phosphate)lysine (lysine 230). 355–357 lines the (6S)-5,6,7,8-tetrahydrofolate pocket; sequence SPF.

This sequence belongs to the SHMT family. As to quaternary structure, homodimer. It depends on pyridoxal 5'-phosphate as a cofactor.

Its subcellular location is the cytoplasm. It carries out the reaction (6R)-5,10-methylene-5,6,7,8-tetrahydrofolate + glycine + H2O = (6S)-5,6,7,8-tetrahydrofolate + L-serine. It functions in the pathway one-carbon metabolism; tetrahydrofolate interconversion. Its pathway is amino-acid biosynthesis; glycine biosynthesis; glycine from L-serine: step 1/1. Functionally, catalyzes the reversible interconversion of serine and glycine with tetrahydrofolate (THF) serving as the one-carbon carrier. This reaction serves as the major source of one-carbon groups required for the biosynthesis of purines, thymidylate, methionine, and other important biomolecules. Also exhibits THF-independent aldolase activity toward beta-hydroxyamino acids, producing glycine and aldehydes, via a retro-aldol mechanism. The polypeptide is Serine hydroxymethyltransferase 2 (Pseudomonas savastanoi pv. phaseolicola (strain 1448A / Race 6) (Pseudomonas syringae pv. phaseolicola (strain 1448A / Race 6))).